Consider the following 340-residue polypeptide: Eukaryotic translation initiation factor 3 subunit I (340 aa).

WD repeat units lie at residues Gly-8–Thr-47, Gly-50–Val-89, Asp-91–Asn-135, Cys-150–Asn-189, Glu-194–Thr-233, and Gly-291–Met-330.

It belongs to the eIF-3 subunit I family. In terms of assembly, component of the eukaryotic translation initiation factor 3 (eIF-3) complex.

Its subcellular location is the cytoplasm. Component of the eukaryotic translation initiation factor 3 (eIF-3) complex, which is involved in protein synthesis of a specialized repertoire of mRNAs and, together with other initiation factors, stimulates binding of mRNA and methionyl-tRNAi to the 40S ribosome. The eIF-3 complex specifically targets and initiates translation of a subset of mRNAs involved in cell proliferation. The protein is Eukaryotic translation initiation factor 3 subunit I of Coccidioides immitis (strain RS) (Valley fever fungus).